The sequence spans 142 residues: ATP synthase epsilon chain, chloroplastic (142 aa).

Belongs to the ATPase epsilon chain family. In terms of assembly, F-type ATPases have 2 components, CF(1) - the catalytic core - and CF(0) - the membrane proton channel. CF(1) has five subunits: alpha(3), beta(3), gamma(1), delta(1), epsilon(1). CF(0) has three main subunits: a, b and c.

The protein localises to the plastid. It localises to the chloroplast thylakoid membrane. Functionally, produces ATP from ADP in the presence of a proton gradient across the membrane. This is ATP synthase epsilon chain, chloroplastic from Ostreococcus tauri.